A 368-amino-acid chain; its full sequence is o-succinylbenzoate synthase (368 aa).

The active-site Proton donor is Lys183. Mg(2+) contacts are provided by Asp213, Glu239, and Asp264. Lys290 serves as the catalytic Proton acceptor.

This sequence belongs to the mandelate racemase/muconate lactonizing enzyme family. MenC type 1 subfamily. Monomer. The cofactor is a divalent metal cation.

It catalyses the reaction (1R,6R)-6-hydroxy-2-succinyl-cyclohexa-2,4-diene-1-carboxylate = 2-succinylbenzoate + H2O. The protein operates within quinol/quinone metabolism; 1,4-dihydroxy-2-naphthoate biosynthesis; 1,4-dihydroxy-2-naphthoate from chorismate: step 4/7. It functions in the pathway cofactor biosynthesis; phylloquinone biosynthesis. Its function is as follows. Converts 2-succinyl-6-hydroxy-2,4-cyclohexadiene-1-carboxylate (SHCHC) to 2-succinylbenzoate (OSB). Does not show N-succinylamino acid racemase (NSAR) activity with N-succinyl-L-phenylglycine as substrate. This Desulfotalea psychrophila (strain LSv54 / DSM 12343) protein is o-succinylbenzoate synthase.